The chain runs to 33 residues: MATKGNLKRQTKYFSTIAYTETRGEATLRANYQ.

This is an uncharacterized protein from Saccharomyces cerevisiae (strain ATCC 204508 / S288c) (Baker's yeast).